An 816-amino-acid polypeptide reads, in one-letter code: uncharacterized protein (816 aa).

Disordered regions lie at residues 1 to 81 and 391 to 411; these read MDVV…NSNN and LGSN…NNDF. The segment covering 28–44 has biased composition (low complexity); sequence EVPPQRPRQQNRWKPWW. Residues 64–81 show a composition bias toward polar residues; it reads QGRSSPTTDFQDSVNSNN. Residues Ser76 and Ser79 each carry the phosphoserine modification. The segment covering 391–400 has biased composition (low complexity); it reads LGSNSSTNEN.

This is an uncharacterized protein from Saccharomyces cerevisiae (strain ATCC 204508 / S288c) (Baker's yeast).